Consider the following 626-residue polypeptide: Lipoprotein LpqB (626 aa).

The signal sequence occupies residues 1–23 (MIGQANRIAAAVSTACLAVLLAG). A lipid anchor (N-palmitoyl cysteine) is attached at cysteine 24. The S-diacylglycerol cysteine moiety is linked to residue cysteine 24. The disordered stretch occupies residues 428–457 (EAEREEDLADDTEPGDTAVGSTERRETDRG). The span at 430-441 (EREEDLADDTEP) shows a compositional bias: acidic residues.

Belongs to the LpqB lipoprotein family.

The protein resides in the cell membrane. This is Lipoprotein LpqB from Thermobifida fusca (strain YX).